We begin with the raw amino-acid sequence, 210 residues long: 2-Cys peroxiredoxin BAS1, chloroplastic (210 aa).

The transit peptide at 1–10 (DARARSFVAR) directs the protein to the chloroplast. The Thioredoxin domain occupies 18–177 (PLVGNKAPDF…TLRTLQALQY (160 aa)). Cysteine 64 functions as the Cysteine sulfenic acid (-SOH) intermediate in the catalytic mechanism.

It belongs to the peroxiredoxin family. AhpC/Prx1 subfamily. As to quaternary structure, homodimer; disulfide-linked, upon oxidation. Expressed in leaf blade, sheath, basiplast, stem and green spike. Maximal expression in young developing shoots segments where cell division and elongation take place. Not expressed in roots.

The protein localises to the plastid. It is found in the chloroplast. It carries out the reaction a hydroperoxide + [thioredoxin]-dithiol = an alcohol + [thioredoxin]-disulfide + H2O. Functionally, thiol-specific peroxidase that catalyzes the reduction of hydrogen peroxide and organic hydroperoxides to water and alcohols, respectively. Plays a role in cell protection against oxidative stress by detoxifying peroxides. May be an antioxidant enzyme particularly in the developing shoot and photosynthesizing leaf. The polypeptide is 2-Cys peroxiredoxin BAS1, chloroplastic (BAS1) (Hordeum vulgare (Barley)).